Here is a 132-residue protein sequence, read N- to C-terminus: Small ribosomal subunit protein uS8 (132 aa).

Belongs to the universal ribosomal protein uS8 family. In terms of assembly, part of the 30S ribosomal subunit. Contacts proteins S5 and S12.

Functionally, one of the primary rRNA binding proteins, it binds directly to 16S rRNA central domain where it helps coordinate assembly of the platform of the 30S subunit. The polypeptide is Small ribosomal subunit protein uS8 (Oceanobacillus iheyensis (strain DSM 14371 / CIP 107618 / JCM 11309 / KCTC 3954 / HTE831)).